Reading from the N-terminus, the 189-residue chain is Peptidyl-tRNA hydrolase (189 aa).

Y15 serves as a coordination point for tRNA. H20 functions as the Proton acceptor in the catalytic mechanism. The tRNA site is built by F66, N68, and N114.

Belongs to the PTH family. As to quaternary structure, monomer.

Its subcellular location is the cytoplasm. It catalyses the reaction an N-acyl-L-alpha-aminoacyl-tRNA + H2O = an N-acyl-L-amino acid + a tRNA + H(+). Its function is as follows. Hydrolyzes ribosome-free peptidyl-tRNAs (with 1 or more amino acids incorporated), which drop off the ribosome during protein synthesis, or as a result of ribosome stalling. In terms of biological role, catalyzes the release of premature peptidyl moieties from peptidyl-tRNA molecules trapped in stalled 50S ribosomal subunits, and thus maintains levels of free tRNAs and 50S ribosomes. The protein is Peptidyl-tRNA hydrolase of Streptococcus mutans serotype c (strain ATCC 700610 / UA159).